Here is a 228-residue protein sequence, read N- to C-terminus: Triosephosphate isomerase (228 aa).

9 to 11 (NFK) serves as a coordination point for substrate. The active-site Electrophile is H93. E141 (proton acceptor) is an active-site residue. Residues I146, G181, and 202–203 (AS) each bind substrate.

The protein belongs to the triosephosphate isomerase family. As to quaternary structure, homotetramer; dimer of dimers.

It localises to the cytoplasm. The enzyme catalyses D-glyceraldehyde 3-phosphate = dihydroxyacetone phosphate. The protein operates within carbohydrate biosynthesis; gluconeogenesis. It participates in carbohydrate degradation; glycolysis; D-glyceraldehyde 3-phosphate from glycerone phosphate: step 1/1. Involved in the gluconeogenesis. Catalyzes stereospecifically the conversion of dihydroxyacetone phosphate (DHAP) to D-glyceraldehyde-3-phosphate (G3P). This Pyrobaculum calidifontis (strain DSM 21063 / JCM 11548 / VA1) protein is Triosephosphate isomerase.